The following is a 119-amino-acid chain: Integration host factor subunit beta (119 aa).

The interval 91–119 (DLVGNDQGDDSSNGSSDPLQSVMDMHAMH) is disordered. The segment covering 94–107 (GNDQGDDSSNGSSD) has biased composition (low complexity).

The protein belongs to the bacterial histone-like protein family. Heterodimer of an alpha and a beta chain.

Functionally, this protein is one of the two subunits of integration host factor, a specific DNA-binding protein that functions in genetic recombination as well as in transcriptional and translational control. This is Integration host factor subunit beta from Bordetella parapertussis (strain 12822 / ATCC BAA-587 / NCTC 13253).